A 232-amino-acid polypeptide reads, in one-letter code: Phospholipase A2 hemilipin (232 aa).

Positions 1-18 (MTFLILTILATVTPSLYS) are cleaved as a signal peptide. The propeptide occupies 19–105 (HVVQRELRVN…QRCSGSAEGR (87 aa)). Trp-115, Gly-117, and Gly-119 together coordinate Ca(2+). 5 disulfides stabilise this stretch: Cys-116–Cys-137, Cys-136–Cys-175, Cys-143–Cys-168, Cys-166–Cys-206, and Cys-211–Cys-219. The N-linked (GlcNAc...) asparagine glycan is linked to Asn-124. The active site involves His-140. Asp-141 lines the Ca(2+) pocket. The N-linked (GlcNAc...) asparagine glycan is linked to Asn-157. A propeptide spanning residues 214–217 (KRDA) is cleaved from the precursor.

This sequence belongs to the phospholipase A2 family. Group III subfamily. In terms of assembly, heterodimer composed of a small subunit and a large subunit; disulfid-linked. Ca(2+) is required as a cofactor. As to expression, expressed by the venom gland.

It localises to the secreted. It carries out the reaction a 1,2-diacyl-sn-glycero-3-phosphocholine + H2O = a 1-acyl-sn-glycero-3-phosphocholine + a fatty acid + H(+). Scorpion venom phospholipase A2 (PLA2) that shows high hydrolytic activities towards lecithin and acts as an effective blocker of all angiogenesis key steps in vivo and in vitro. It has no effect on apoptosis and does not display hemolytic, inflammatory or neurotoxic effects. PLA2 catalyzes the calcium-dependent hydrolysis of the 2-acyl groups in 3-sn-phosphoglycerides. This Hemiscorpius lepturus (Scorpion) protein is Phospholipase A2 hemilipin.